The primary structure comprises 228 residues: UPF0173 metal-dependent hydrolase LMOf2365_1599 (228 aa).

Belongs to the UPF0173 family.

This Listeria monocytogenes serotype 4b (strain F2365) protein is UPF0173 metal-dependent hydrolase LMOf2365_1599.